A 63-amino-acid chain; its full sequence is Large ribosomal subunit protein uL30 (63 aa).

It belongs to the universal ribosomal protein uL30 family. Part of the 50S ribosomal subunit.

The polypeptide is Large ribosomal subunit protein uL30 (Stenotrophomonas maltophilia (strain K279a)).